Here is a 358-residue protein sequence, read N- to C-terminus: Protein FAM50 homolog (358 aa).

A compositionally biased stretch (basic and acidic residues) spans alanine 104–lysine 113. The disordered stretch occupies residues alanine 104–glutamate 151. Acidic residues predominate over residues aspartate 122–glutamate 137. Basic and acidic residues predominate over residues glycine 138–glutamate 151.

It belongs to the FAM50 family.

In Anopheles gambiae (African malaria mosquito), this protein is Protein FAM50 homolog.